The primary structure comprises 446 residues: Tubulin alpha chain-like 3 (446 aa).

Positions 1–4 (MREC) match the MREC motif motif. Residues glutamine 11, glutamate 78, serine 147, glycine 151, threonine 152, threonine 186, asparagine 213, and asparagine 235 each contribute to the GTP site. Residue glutamate 78 coordinates Mg(2+). Glutamate 261 is an active-site residue.

It belongs to the tubulin family. Dimer of alpha and beta chains. A typical microtubule is a hollow water-filled tube with an outer diameter of 25 nm and an inner diameter of 15 nM. Alpha-beta heterodimers associate head-to-tail to form protofilaments running lengthwise along the microtubule wall with the beta-tubulin subunit facing the microtubule plus end conferring a structural polarity. Microtubules usually have 13 protofilaments but different protofilament numbers can be found in some organisms and specialized cells. Mg(2+) serves as cofactor. Post-translationally, some glutamate residues at the C-terminus are polyglutamylated, resulting in polyglutamate chains on the gamma-carboxyl group. Polyglutamylation plays a key role in microtubule severing by spastin (SPAST). SPAST preferentially recognizes and acts on microtubules decorated with short polyglutamate tails: severing activity by SPAST increases as the number of glutamates per tubulin rises from one to eight, but decreases beyond this glutamylation threshold. Glutamylation is also involved in cilia motility. In terms of processing, some glutamate residues at the C-terminus are monoglycylated but not polyglycylated due to the absence of functional TTLL10 in human. Monoglycylation is mainly limited to tubulin incorporated into cilia and flagella axonemes, which is required for their stability and maintenance. Flagella glycylation controls sperm motility. Both polyglutamylation and monoglycylation can coexist on the same protein on adjacent residues, and lowering glycylation levels increases polyglutamylation, and reciprocally.

It localises to the cytoplasm. It is found in the cytoskeleton. It carries out the reaction GTP + H2O = GDP + phosphate + H(+). Its function is as follows. Tubulin is the major constituent of microtubules, a cylinder consisting of laterally associated linear protofilaments composed of alpha- and beta-tubulin heterodimers. Microtubules grow by the addition of GTP-tubulin dimers to the microtubule end, where a stabilizing cap forms. Below the cap, tubulin dimers are in GDP-bound state, owing to GTPase activity of alpha-tubulin. This chain is Tubulin alpha chain-like 3 (TUBAL3), found in Homo sapiens (Human).